The sequence spans 216 residues: MADLKVGSTVGGSVIWHQGNFPLNSAGDDVLYKSFKIYSEYNKPQAADNDFVSKANGGTYTGPITINYGVNSYLQLSNNETPIRIRSGGGTGNTLVVGGSSGGISFRPAGSEITTGQITITPEGLTTFTRAVTAPSITVTSTPSAASDVTRKDYVDGAINTVTANANSRVLRSGDTMTGNLTAPNLFSQNPASQPSHVPRFDQIVIKDSVQDFGYY.

As to quaternary structure, the distal half-fiber contains two molecules each of Gp36 and Gp37 and one molecule of Gp35.

The protein localises to the virion. Structural component of the distal-half tail fiber. The protein is Tail fiber protein p36 (36) of Enterobacteria phage Ox2 (Bacteriophage Ox2).